The following is a 188-amino-acid chain: PRA1 family protein F3 (188 aa).

The next 4 helical transmembrane spans lie at 74 to 94 (IVVL…LIVF), 95 to 115 (TVLV…IKLF), 123 to 143 (TVLI…NATF), and 145 to 165 (IVGA…VRKT).

This sequence belongs to the PRA1 family. Interacts with PRA1F2 and PRA1D. Interacts with ACD11 and BPA1. In terms of tissue distribution, expressed in lateral roots, lateral root caps and columella cells.

Its subcellular location is the endoplasmic reticulum membrane. The protein localises to the membrane. It localises to the cytoplasm. Its function is as follows. May be involved in both secretory and endocytic intracellular trafficking in the endosomal/prevacuolar compartments. This Arabidopsis thaliana (Mouse-ear cress) protein is PRA1 family protein F3.